Consider the following 629-residue polypeptide: tRNA uridine 5-carboxymethylaminomethyl modification enzyme MnmG (629 aa).

13–18 is a binding site for FAD; it reads GGGHAG. 273 to 287 is an NAD(+) binding site; the sequence is GPRYCPSIEDKINRF.

Belongs to the MnmG family. In terms of assembly, homodimer. Heterotetramer of two MnmE and two MnmG subunits. It depends on FAD as a cofactor.

It is found in the cytoplasm. Functionally, NAD-binding protein involved in the addition of a carboxymethylaminomethyl (cmnm) group at the wobble position (U34) of certain tRNAs, forming tRNA-cmnm(5)s(2)U34. The sequence is that of tRNA uridine 5-carboxymethylaminomethyl modification enzyme MnmG from Shewanella piezotolerans (strain WP3 / JCM 13877).